The chain runs to 239 residues: 4-hydroxy-tetrahydrodipicolinate reductase (239 aa).

NAD(+) is bound by residues glycine 12–methionine 17, glycine 94–threonine 96, and alanine 118–phenylalanine 121. Histidine 150 functions as the Proton donor/acceptor in the catalytic mechanism. Residue histidine 151 coordinates (S)-2,3,4,5-tetrahydrodipicolinate. Lysine 154 functions as the Proton donor in the catalytic mechanism. Position 160–161 (glycine 160–threonine 161) interacts with (S)-2,3,4,5-tetrahydrodipicolinate.

Belongs to the DapB family.

The protein resides in the cytoplasm. It catalyses the reaction (S)-2,3,4,5-tetrahydrodipicolinate + NAD(+) + H2O = (2S,4S)-4-hydroxy-2,3,4,5-tetrahydrodipicolinate + NADH + H(+). It carries out the reaction (S)-2,3,4,5-tetrahydrodipicolinate + NADP(+) + H2O = (2S,4S)-4-hydroxy-2,3,4,5-tetrahydrodipicolinate + NADPH + H(+). It participates in amino-acid biosynthesis; L-lysine biosynthesis via DAP pathway; (S)-tetrahydrodipicolinate from L-aspartate: step 4/4. In terms of biological role, catalyzes the conversion of 4-hydroxy-tetrahydrodipicolinate (HTPA) to tetrahydrodipicolinate. The protein is 4-hydroxy-tetrahydrodipicolinate reductase of Stenotrophomonas maltophilia (strain R551-3).